The following is a 607-amino-acid chain: Lipid-A-disaccharide synthase (607 aa).

Residues 1–224 (MFPQKITLWL…ASREAFRKPF (224 aa)) form a unknown region. The tract at residues 225–607 (SNSCFISAGE…CLSLIFETAS (383 aa)) is lipid-A-disaccharide synthase.

This sequence in the C-terminal section; belongs to the LpxB family.

The enzyme catalyses a lipid X + a UDP-2-N,3-O-bis[(3R)-3-hydroxyacyl]-alpha-D-glucosamine = a lipid A disaccharide + UDP + H(+). The protein operates within bacterial outer membrane biogenesis; LPS lipid A biosynthesis. Functionally, condensation of UDP-2,3-diacylglucosamine and 2,3-diacylglucosamine-1-phosphate to form lipid A disaccharide, a precursor of lipid A, a phosphorylated glycolipid that anchors the lipopolysaccharide to the outer membrane of the cell. This Chlamydia trachomatis serovar A (strain ATCC VR-571B / DSM 19440 / HAR-13) protein is Lipid-A-disaccharide synthase (lpxB).